The sequence spans 377 residues: Nitric oxide reductase FlRd-NAD(+) reductase (377 aa).

The protein belongs to the FAD-dependent oxidoreductase family. Requires FAD as cofactor.

Its subcellular location is the cytoplasm. It carries out the reaction 2 reduced [nitric oxide reductase rubredoxin domain] + NAD(+) + H(+) = 2 oxidized [nitric oxide reductase rubredoxin domain] + NADH. The protein operates within nitrogen metabolism; nitric oxide reduction. One of at least two accessory proteins for anaerobic nitric oxide (NO) reductase. Reduces the rubredoxin moiety of NO reductase. This chain is Nitric oxide reductase FlRd-NAD(+) reductase, found in Salmonella paratyphi B (strain ATCC BAA-1250 / SPB7).